The primary structure comprises 173 residues: Microfibrillar-associated protein 5 (173 aa).

The N-terminal stretch at 1 to 21 is a signal peptide; that stretch reads MSLLGPKVLLFLAAFIITSDW. The Cell attachment site motif lies at 30 to 32; sequence RGD. Thr54 carries O-linked (GalNAc...) threonine glycosylation. Residue Asn79 is glycosylated (N-linked (GlcNAc...) asparagine).

It belongs to the MFAP family. In terms of assembly, interacts with TGFB2. Interacts with BMP2. Interacts with FBN1 (via N-terminal domain) and FBN2. Forms intermolecular disulfide bonds either with other MAGP-2 molecules or with other components of the microfibrils. In terms of processing, N- and O-glycosylated. O-glycosylated with core 1 or possibly core 8 glycans. O-glycan heterogeneity at Thr-54: HexHexNAc (major) and HexHexNAc + sulfate (minor).

The protein resides in the secreted. The protein localises to the extracellular space. It localises to the extracellular matrix. May play a role in hematopoiesis. In the cardiovascular system, could regulate growth factors or participate in cell signaling in maintaining large vessel integrity. Component of the elastin-associated microfibrils. The polypeptide is Microfibrillar-associated protein 5 (MFAP5) (Homo sapiens (Human)).